A 59-amino-acid chain; its full sequence is Small ribosomal subunit protein bS21A (59 aa).

The protein belongs to the bacterial ribosomal protein bS21 family.

The chain is Small ribosomal subunit protein bS21A from Gloeobacter violaceus (strain ATCC 29082 / PCC 7421).